Reading from the N-terminus, the 325-residue chain is Helicase VP6-A (325 aa).

Disordered regions lie at residues 1–127 and 174–230; these read MLLA…NGRR and EGVA…EPAR. Composition is skewed to basic and acidic residues over residues 8–18, 32–54, 61–79, and 92–105; these read VIKRSSEELKQ, EGGKENKTEPKEESKAEGSKDGE, GQKEEGGKETKDADVDRRI, and PGERANENADRGDG. Lys106 is an ATP binding site. A compositionally biased stretch (gly residues) spans 106-122; the sequence is KVGGGGGDADAGVGATG. Over residues 175-229 the composition is skewed to basic and acidic residues; sequence GVAEQTERSRDLRRKEKNGTHAKAVERGGRKQRKESHGDAQREGVEEEKTSEEPA.

The protein belongs to the orbivirus VP6 family. As to quaternary structure, homohexamer.

The protein resides in the virion. It catalyses the reaction ATP + H2O = ADP + phosphate + H(+). Its function is as follows. ATP dependent RNA helicase essential for RNA packaging and viral transcription. Possesses ss- and dsRNA-binding capacity. In Bluetongue virus 13 (isolate USA) (BTV 13), this protein is Helicase VP6-A (Segment-9).